Reading from the N-terminus, the 814-residue chain is Acyl-coenzyme A dehydrogenase (814 aa).

The active-site Proton acceptor is the Glu-497.

The protein belongs to the acyl-CoA dehydrogenase family. FAD serves as cofactor.

The enzyme catalyses a medium-chain 2,3-saturated fatty acyl-CoA + oxidized [electron-transfer flavoprotein] + H(+) = a medium-chain (2E)-enoyl-CoA + reduced [electron-transfer flavoprotein]. The catalysed reaction is a long-chain 2,3-saturated fatty acyl-CoA + oxidized [electron-transfer flavoprotein] + H(+) = a long-chain (2E)-enoyl-CoA + reduced [electron-transfer flavoprotein]. It participates in lipid metabolism; fatty acid beta-oxidation. Its function is as follows. Catalyzes the dehydrogenation of acyl-coenzymes A (acyl-CoAs) to 2-enoyl-CoAs, the first step of the beta-oxidation cycle of fatty acid degradation. Is required for the utilization of medium- and long-chain fatty acids as sole carbon sources for growth. Is needed for bacterial survival during carbone-source starvation. The sequence is that of Acyl-coenzyme A dehydrogenase (fadE) from Salmonella typhi.